We begin with the raw amino-acid sequence, 251 residues long: MSEKPKVYQGVRVKITVKELLQQRRAHQAASGGTRSGGSSVHLSDPVAPSSAGLYFEPEPISSTPNYLQRGEFSSCVSCEENSSCLDQIFDSYLQTEMHPEPLLNSTQSAPHHFPDSFQATPFCFNQSLIPGSPSNSSILSGSLDYSYSPVQLPSYAPENYNSPASLDTRTCGYPPEDHSYQHLSSHAQYSCFSSATTSICYCASCEAEDLDALQAAEYFYPSTDCVDFAPSAAATSDFYKRETNCDICYS.

The OCA domain maps to 5–27 (PKVYQGVRVKITVKELLQQRRAH). The segment at 24–45 (RRAHQAASGGTRSGGSSVHLSD) is disordered. Positions 31–40 (SGGTRSGGSS) are enriched in low complexity.

Belongs to the POU2AF family. Interacts with POU2F3 in a DNA-dependent manner; this interaction increases POU2F3 transactivation activity. Expressed in many cell types of epithelial, mesenchymal and hematopoietic origins. Expressed in tufs cells.

The protein resides in the cytoplasm. Its subcellular location is the nucleus. Transcriptional coactivator that specifically associates with POU2F3. This complex drives the development of tuft cells, a rare a rare chemosensory cells that coordinate immune and neural functions within mucosal epithelial tissues. In Homo sapiens (Human), this protein is POU class 2 homeobox associating factor 3.